A 61-amino-acid polypeptide reads, in one-letter code: Metallothionein-1 (61 aa).

Met-1 carries the post-translational modification N-acetylmethionine. Residues 1–29 form a beta region; it reads MDPNCSCSTGSTCTCSSSCGCKDCKCTSC. Residues Cys-5, Cys-7, Cys-13, Cys-15, Cys-19, Cys-21, Cys-24, Cys-26, Cys-29, Cys-33, Cys-34, Cys-36, Cys-37, Cys-41, Cys-44, Cys-48, Cys-50, Cys-57, Cys-59, and Cys-60 each contribute to the a divalent metal cation site. An alpha region spans residues 30–61; sequence KKSCCSCCPVGCSKCAQGCVCKGASDKCTCCA.

Belongs to the metallothionein superfamily. Type 1 family.

Its function is as follows. Metallothioneins have a high content of cysteine residues that bind various heavy metals; these proteins are transcriptionally regulated by both heavy metals and glucocorticoids. This Cricetulus griseus (Chinese hamster) protein is Metallothionein-1 (MT1).